The primary structure comprises 483 residues: Rhamnulokinase (483 aa).

Residue 11 to 15 (ASSGR) participates in ATP binding. Substrate-binding positions include G79 and 234–236 (HDT). D235 serves as the catalytic Proton acceptor. T257 lines the ATP pocket. N294 contacts substrate. Residue Q302 participates in ATP binding. A disulfide bond links C352 and C369. G401 contributes to the ATP binding site.

Belongs to the rhamnulokinase family. Mg(2+) is required as a cofactor.

The catalysed reaction is L-rhamnulose + ATP = L-rhamnulose 1-phosphate + ADP + H(+). Its pathway is carbohydrate degradation; L-rhamnose degradation; glycerone phosphate from L-rhamnose: step 2/3. Its function is as follows. Involved in the catabolism of L-rhamnose (6-deoxy-L-mannose). Catalyzes the transfer of the gamma-phosphate group from ATP to the 1-hydroxyl group of L-rhamnulose to yield L-rhamnulose 1-phosphate. This Listeria monocytogenes serotype 4b (strain F2365) protein is Rhamnulokinase.